Consider the following 207-residue polypeptide: MTRLNVKPTRMELNNLKARLKTAVRGHKLLKDKRDELMRRFIESVRENNQLRQKVESALVGHLQDFVMAKALESDLMVEEIFAVPMREVNLHVETENIMSVRVPKMHAHIDNPYGDDEGDVVYSYVASNSQMDETIESMSDLLPDLLRLAEIEKSCQLMADEIEKTRRRVNGLEYATIPDLKETIYYIEMKLEEAERASLVRMMKVK.

This sequence belongs to the V-ATPase D subunit family.

In terms of biological role, produces ATP from ADP in the presence of a proton gradient across the membrane. The chain is V-type ATP synthase subunit D from Streptococcus gordonii (strain Challis / ATCC 35105 / BCRC 15272 / CH1 / DL1 / V288).